A 350-amino-acid polypeptide reads, in one-letter code: tRNA uridine(34) hydroxylase (350 aa).

The 95-residue stretch at 146 to 240 (DDPDALFIDM…YARKAREQGL (95 aa)) folds into the Rhodanese domain. Cys200 (cysteine persulfide intermediate) is an active-site residue.

The protein belongs to the TrhO family.

It catalyses the reaction uridine(34) in tRNA + AH2 + O2 = 5-hydroxyuridine(34) in tRNA + A + H2O. Catalyzes oxygen-dependent 5-hydroxyuridine (ho5U) modification at position 34 in tRNAs, the first step in 5-carboxymethoxyuridine (cmo5U) biosynthesis. May be part of an alternate pathway, which is able to bypass cmo5U biogenesis in a subset of tRNAs under aerobic conditions. The protein is tRNA uridine(34) hydroxylase of Escherichia coli (strain SE11).